A 536-amino-acid polypeptide reads, in one-letter code: Proto-oncogene tyrosine-protein kinase Src (536 aa).

The tract at residues Met-1–Ala-53 is disordered. Gly-2 is lipidated: N-myristoyl glycine. Basic and acidic residues predominate over residues Lys-7 to Glu-19. A Phosphoserine modification is found at Ser-17. Phosphoserine; by CDK5 is present on Ser-75. The SH3 domain maps to Gly-84–Ser-145. Residues Trp-151–Cys-248 enclose the SH2 domain. Position 187 is a phosphotyrosine (Tyr-187). A Protein kinase domain is found at Leu-270–Phe-523. ATP is bound by residues Leu-276–Val-284 and Lys-298. The active-site Proton acceptor is Asp-389. Phosphotyrosine; by autocatalysis is present on Tyr-419. Tyr-419 carries the phosphotyrosine; by FAK2 modification. Tyr-530 is modified (phosphotyrosine; by CSK).

This sequence belongs to the protein kinase superfamily. Tyr protein kinase family. SRC subfamily. In terms of assembly, part of a complex comprised of PTPRA, BCAR1, BCAR3 (via SH2 domain) and SRC; the formation of the complex is dependent on integrin mediated-tyrosine phosphorylation of PTPRA. Interacts with DDEF1/ASAP1; via the SH3 domain. Interacts with CCPG1. Identified in a complex containing FGFR4, NCAM1, CDH2, PLCG1, FRS2, SRC, SHC1, GAP43 and CTTN. Interacts with ERBB2, STAT1 and PNN. Interacts with DDR1, DDR2 and DAB2. Interacts with CDCP1, TGFB1I1 and TOM1L2. Interacts with the cytoplasmic domain of MUC1, phosphorylates it and increases binding of MUC1 with beta-catenin. Interacts with RALGPS1; via the SH3 domain. Interacts with CAV2 (tyrosine phosphorylated form). Interacts (via the SH3 domain and the protein kinase domain) with ARRB1; the interaction is independent of the phosphorylation state of SRC C-terminus. Interacts with ARRB1 and ARRB2. Interacts with SRCIN1. Interacts with NDFIP2 and more weakly with NDFIP1. Interacts with PIK3CA and/or PIK3C2B, PTK2/FAK1 and ESR1 (dimethylated on arginine). Interacts with FASLG. Interacts (via SH2 domain) with the 'Tyr-402' phosphorylated form of PTK2B/PYK2. Interacts (via SH2 domain) with FLT3 (tyrosine phosphorylated). Interacts with PDGFRA (tyrosine phosphorylated). Interacts with CSF1R. Interacts (via SH2 and SH3 domain) with TNK2. Interacts (via protein kinase domain) with the tyrosine phosphorylated form of RUNX3 (via runt domain). Interacts with TRAF3 (via RING-type zinc finger domain). Interacts with RIGI, MAVS and TBK1. Interacts (via SH2 domain) with RACK1; the interaction is enhanced by tyrosine phosphorylation of RACK1 and inhibits SRC activity. Interacts with EPHB1; activates the MAPK/ERK cascade to regulate cell migration. Interacts with FCAMR. Interacts (via SH2 domain) with the 'Tyr-9' phosphorylated form of PDPK1. Interacts with AMOTL2; this interaction regulates the translocation of phosphorylated SRC to peripheral cell-matrix adhesion sites. Interacts with TRAP1. Interacts with CBLC; the interaction is enhanced when SRC is phosphorylated at Tyr-419. Interacts with ARHGEF5. Interacts (via cytoplasmic domain) with CEACAM1 (via SH2 domain); this interaction is regulated by trans-homophilic cell adhesion. Interacts with MPP2. Interacts with PRR7. Interacts (via kinase domain and to a lesser extent the SH2 domain) directly with PDLIM4; this interaction results in PTPN13-mediated dephosphorylation of this protein leading to its inactivation. Interacts with P85 (PIK3R1 or PIK3R2). Interacts with HNRNPA2B1. Interacts with IL6ST/gp130. Interacts (via SH3 domain) with PELP1 in the presence of 17-beta-estradiol. Interacts with AMBRA1. (Microbial infection) Interacts with HEV ORF3 protein; via the SH3 domain. As to quaternary structure, (Microbial infection) Interacts (via SH2 domain) with HCV non-structural protein 5A (via N-terminus). In terms of processing, myristoylated at Gly-2, and this is essential for targeting to membranes. Dephosphorylated at Tyr-530 by PTPRJ. Phosphorylated on Tyr-530 by c-Src kinase (CSK). The phosphorylated form is termed pp60c-src. Dephosphorylated by PTPRJ at Tyr-419. Normally maintained in an inactive conformation with the SH2 domain engaged with Tyr-530, the SH3 domain engaged with the SH2-kinase linker, and Tyr-419 dephosphorylated. Dephosphorylation of Tyr-530 as a result of protein tyrosine phosphatase (PTP) action disrupts the intramolecular interaction between the SH2 domain and Tyr-530, Tyr-419 can then become autophosphorylated, resulting in SRC activation. Phosphorylation of Tyr-530 by CSK allows this interaction to reform, resulting in SRC inactivation. CDK5-mediated phosphorylation at Ser-75 targets SRC to ubiquitin-dependent degradation and thus leads to cytoskeletal reorganization. Phosphorylated by PTK2/FAK1; this enhances kinase activity. Phosphorylated by PTK2B/PYK2; this enhances kinase activity. Upon activation of IL6ST by IL6, Tyr-419 is phosphorylated and Tyr-530 dephosphorylated. Post-translationally, displays reduced levels of autophosphorylation at Tyr-419 compared to isoforms 2 and 3. In terms of processing, displays enhanced levels of autophosphorylation at Tyr-419 compared to isoform 1. Displays enhanced levels of autophosphorylation at Tyr-419 compared to isoform 1. Shows reduced phosphorylation at Tyr-527 compared to isoforms 1 and 2. Post-translationally, S-nitrosylation is important for activation of its kinase activity. In terms of processing, ubiquitinated in response to CDK5-mediated phosphorylation. Ubiquitination mediated by CBLC requires SRC autophosphorylation at Tyr-419 and may lead to lysosomal degradation. In terms of tissue distribution, expressed ubiquitously. Expressed in the skin (at protein level). Platelets, neurons and osteoclasts express 5-fold to 200-fold higher levels than most other tissues. Expressed in spleen and liver. As to expression, expressed in brain.

Its subcellular location is the cell membrane. The protein resides in the mitochondrion inner membrane. It is found in the nucleus. The protein localises to the cytoplasm. It localises to the cytoskeleton. Its subcellular location is the perinuclear region. The protein resides in the cell junction. It is found in the focal adhesion. It catalyses the reaction L-tyrosyl-[protein] + ATP = O-phospho-L-tyrosyl-[protein] + ADP + H(+). Phosphorylation by CSK at Tyr-530 inhibits kinase activity. Inhibitory phosphorylation at Tyr-530 is enhanced by heme. Further phosphorylation by CDK1 partially reactivates CSK-inactivated SRC and facilitates complete reactivation by protein tyrosine phosphatase PTPRC. Integrin engagement stimulates kinase activity. Phosphorylation by PTK2/FAK1 enhances kinase activity. Butein and pseudosubstrate-based peptide inhibitors like CIYKYYF act as inhibitors. Phosphorylation at Tyr-419 increases kinase activity. In terms of biological role, non-receptor protein tyrosine kinase which is activated following engagement of many different classes of cellular receptors including immune response receptors, integrins and other adhesion receptors, receptor protein tyrosine kinases, G protein-coupled receptors as well as cytokine receptors. Participates in signaling pathways that control a diverse spectrum of biological activities including gene transcription, immune response, cell adhesion, cell cycle progression, apoptosis, migration, and transformation. Due to functional redundancy between members of the SRC kinase family, identification of the specific role of each SRC kinase is very difficult. SRC appears to be one of the primary kinases activated following engagement of receptors and plays a role in the activation of other protein tyrosine kinase (PTK) families. Receptor clustering or dimerization leads to recruitment of SRC to the receptor complexes where it phosphorylates the tyrosine residues within the receptor cytoplasmic domains. Plays an important role in the regulation of cytoskeletal organization through phosphorylation of specific substrates such as AFAP1. Phosphorylation of AFAP1 allows the SRC SH2 domain to bind AFAP1 and to localize to actin filaments. Cytoskeletal reorganization is also controlled through the phosphorylation of cortactin (CTTN). When cells adhere via focal adhesions to the extracellular matrix, signals are transmitted by integrins into the cell resulting in tyrosine phosphorylation of a number of focal adhesion proteins, including PTK2/FAK1 and paxillin (PXN). In addition to phosphorylating focal adhesion proteins, SRC is also active at the sites of cell-cell contact adherens junctions and phosphorylates substrates such as beta-catenin (CTNNB1), delta-catenin (CTNND1), and plakoglobin (JUP). Another type of cell-cell junction, the gap junction, is also a target for SRC, which phosphorylates connexin-43 (GJA1). SRC is implicated in regulation of pre-mRNA-processing and phosphorylates RNA-binding proteins such as KHDRBS1. Phosphorylates PKP3 at 'Tyr-195' in response to reactive oxygen species, which may cause the release of PKP3 from desmosome cell junctions into the cytoplasm. Also plays a role in PDGF-mediated tyrosine phosphorylation of both STAT1 and STAT3, leading to increased DNA binding activity of these transcription factors. Involved in the RAS pathway through phosphorylation of RASA1 and RASGRF1. Plays a role in EGF-mediated calcium-activated chloride channel activation. Required for epidermal growth factor receptor (EGFR) internalization through phosphorylation of clathrin heavy chain (CLTC and CLTCL1) at 'Tyr-1477'. Involved in beta-arrestin (ARRB1 and ARRB2) desensitization through phosphorylation and activation of GRK2, leading to beta-arrestin phosphorylation and internalization. Has a critical role in the stimulation of the CDK20/MAPK3 mitogen-activated protein kinase cascade by epidermal growth factor. Might be involved not only in mediating the transduction of mitogenic signals at the level of the plasma membrane but also in controlling progression through the cell cycle via interaction with regulatory proteins in the nucleus. Plays an important role in osteoclastic bone resorption in conjunction with PTK2B/PYK2. Both the formation of a SRC-PTK2B/PYK2 complex and SRC kinase activity are necessary for this function. Recruited to activated integrins by PTK2B/PYK2, thereby phosphorylating CBL, which in turn induces the activation and recruitment of phosphatidylinositol 3-kinase to the cell membrane in a signaling pathway that is critical for osteoclast function. Promotes energy production in osteoclasts by activating mitochondrial cytochrome C oxidase. Phosphorylates DDR2 on tyrosine residues, thereby promoting its subsequent autophosphorylation. Phosphorylates RUNX3 and COX2 on tyrosine residues, TNK2 on 'Tyr-284' and CBL on 'Tyr-731'. Enhances RIGI-elicited antiviral signaling. Phosphorylates PDPK1 at 'Tyr-9', 'Tyr-373' and 'Tyr-376'. Phosphorylates BCAR1 at 'Tyr-128'. Phosphorylates CBLC at multiple tyrosine residues, phosphorylation at 'Tyr-341' activates CBLC E3 activity. Phosphorylates synaptic vesicle protein synaptophysin (SYP). Involved in anchorage-independent cell growth. Required for podosome formation. Mediates IL6 signaling by activating YAP1-NOTCH pathway to induce inflammation-induced epithelial regeneration. Phosphorylates OTUB1, promoting deubiquitination of RPTOR. Phosphorylates caspase CASP8 at 'Tyr-380' which negatively regulates CASP8 processing and activation, down-regulating CASP8 proapoptotic function. Its function is as follows. Non-receptor protein tyrosine kinase which phosphorylates synaptophysin with high affinity. Functionally, non-receptor protein tyrosine kinase which shows higher basal kinase activity than isoform 1, possibly due to weakened intramolecular interactions which enhance autophosphorylation of Tyr-419 and subsequent activation. The SH3 domain shows reduced affinity with the linker sequence between the SH2 and kinase domains which may account for the increased basal activity. Displays altered substrate specificity compared to isoform 1, showing weak affinity for synaptophysin and for peptide substrates containing class I or class II SH3 domain-binding motifs. Plays a role in L1CAM-mediated neurite elongation, possibly by acting downstream of L1CAM to drive cytoskeletal rearrangements involved in neurite outgrowth. Non-receptor protein tyrosine kinase which shows higher basal kinase activity than isoform 1, possibly due to weakened intramolecular interactions which enhance autophosphorylation of Tyr-419 and subsequent activation. The SH3 domain shows reduced affinity with the linker sequence between the SH2 and kinase domains which may account for the increased basal activity. Displays altered substrate specificity compared to isoform 1, showing weak affinity for synaptophysin and for peptide substrates containing class I or class II SH3 domain-binding motifs. Plays a role in neurite elongation. This chain is Proto-oncogene tyrosine-protein kinase Src, found in Homo sapiens (Human).